Consider the following 609-residue polypeptide: Glutamine--fructose-6-phosphate aminotransferase [isomerizing] (609 aa).

Residue Cys2 is the Nucleophile; for GATase activity of the active site. Positions Cys2–Arg218 constitute a Glutamine amidotransferase type-2 domain. SIS domains follow at residues Ala286–Leu426 and Leu458–Pro599. Residue Lys604 is the For Fru-6P isomerization activity of the active site.

In terms of assembly, homodimer.

It is found in the cytoplasm. The enzyme catalyses D-fructose 6-phosphate + L-glutamine = D-glucosamine 6-phosphate + L-glutamate. Functionally, catalyzes the first step in hexosamine metabolism, converting fructose-6P into glucosamine-6P using glutamine as a nitrogen source. This is Glutamine--fructose-6-phosphate aminotransferase [isomerizing] from Escherichia coli O157:H7.